Reading from the N-terminus, the 337-residue chain is Tryptophan--tRNA ligase (337 aa).

ATP-binding positions include 11 to 13 (QPT) and 19 to 20 (GN). Positions 12-20 (PTGALHLGN) match the 'HIGH' region motif. Residue aspartate 135 coordinates L-tryptophan. Residues 147–149 (GED), valine 191, and 200–204 (KMSKS) each bind ATP. Residues 200–204 (KMSKS) carry the 'KMSKS' region motif.

It belongs to the class-I aminoacyl-tRNA synthetase family. Homodimer.

The protein localises to the cytoplasm. It carries out the reaction tRNA(Trp) + L-tryptophan + ATP = L-tryptophyl-tRNA(Trp) + AMP + diphosphate + H(+). In terms of biological role, catalyzes the attachment of tryptophan to tRNA(Trp). In Parasynechococcus marenigrum (strain WH8102), this protein is Tryptophan--tRNA ligase.